The chain runs to 196 residues: Holliday junction branch migration complex subunit RuvA (196 aa).

A domain I region spans residues methionine 1 to isoleucine 63. A domain II region spans residues aspartate 64 to isoleucine 142. The interval isoleucine 143–isoleucine 146 is flexible linker. The domain III stretch occupies residues isoleucine 146 to leucine 196.

This sequence belongs to the RuvA family. As to quaternary structure, homotetramer. Forms an RuvA(8)-RuvB(12)-Holliday junction (HJ) complex. HJ DNA is sandwiched between 2 RuvA tetramers; dsDNA enters through RuvA and exits via RuvB. An RuvB hexamer assembles on each DNA strand where it exits the tetramer. Each RuvB hexamer is contacted by two RuvA subunits (via domain III) on 2 adjacent RuvB subunits; this complex drives branch migration. In the full resolvosome a probable DNA-RuvA(4)-RuvB(12)-RuvC(2) complex forms which resolves the HJ.

It is found in the cytoplasm. Its function is as follows. The RuvA-RuvB-RuvC complex processes Holliday junction (HJ) DNA during genetic recombination and DNA repair, while the RuvA-RuvB complex plays an important role in the rescue of blocked DNA replication forks via replication fork reversal (RFR). RuvA specifically binds to HJ cruciform DNA, conferring on it an open structure. The RuvB hexamer acts as an ATP-dependent pump, pulling dsDNA into and through the RuvAB complex. HJ branch migration allows RuvC to scan DNA until it finds its consensus sequence, where it cleaves and resolves the cruciform DNA. The sequence is that of Holliday junction branch migration complex subunit RuvA from Azobacteroides pseudotrichonymphae genomovar. CFP2.